Consider the following 214-residue polypeptide: External core antigen (214 aa).

Residues 1–19 (MQLFHLCLIISCTCPTVQA) form the signal peptide. The HBEAG stretch occupies residues 25–27 (GWL). The disordered stretch occupies residues 165–214 (NAPILSTLPETTVVRRRDRGRSPRRRTPSPRRRRSQSPRRRRSQSRESQC). The span at 178–207 (VRRRDRGRSPRRRTPSPRRRRSQSPRRRRS) shows a compositional bias: basic residues. The stretch at 186–192 (SPRRRTP) is one 1; half-length repeat. Positions 186–208 (SPRRRTPSPRRRRSQSPRRRRSQ) are 3 X 8 AA repeats of S-P-R-R-R-R-S-Q. The propeptide occupies 186 to 214 (SPRRRTPSPRRRRSQSPRRRRSQSRESQC). Repeat copies occupy residues 193–200 (SPRRRRSQ) and 201–208 (SPRRRRSQ).

It belongs to the orthohepadnavirus precore antigen family. As to quaternary structure, homodimerizes. In terms of processing, phosphorylated. Post-translationally, cleaved by host furin.

The protein localises to the secreted. It is found in the host nucleus. Functionally, may regulate immune response to the intracellular capsid in acting as a T-cell tolerogen, by having an immunoregulatory effect which prevents destruction of infected cells by cytotoxic T-cells. This immune regulation may predispose to chronicity during perinatal infections and prevent severe liver injury during adult infections. This chain is External core antigen, found in Hepatitis B virus genotype A2 subtype adw2 (isolate Germany/991/1990) (HBV-A).